The chain runs to 177 residues: MSELTTIARPYAKAAFDFAIEQSAVEKWTEMLGFAAAVAEDETVKAYLSSSLSAQKLADTVISICGEQLDQYGQNLIRLMAENKRLSAIPAVFEEFKHHVEEHQAIAEVEVTSAQPLNATQIEKIAAAMEKRLARKVKLNCNVDNALIAGVIIRTEDFVIDGSSRGQLTRLANELQL.

The protein belongs to the ATPase delta chain family. In terms of assembly, F-type ATPases have 2 components, F(1) - the catalytic core - and F(0) - the membrane proton channel. F(1) has five subunits: alpha(3), beta(3), gamma(1), delta(1), epsilon(1). F(0) has three main subunits: a(1), b(2) and c(10-14). The alpha and beta chains form an alternating ring which encloses part of the gamma chain. F(1) is attached to F(0) by a central stalk formed by the gamma and epsilon chains, while a peripheral stalk is formed by the delta and b chains.

It is found in the cell inner membrane. Its function is as follows. F(1)F(0) ATP synthase produces ATP from ADP in the presence of a proton or sodium gradient. F-type ATPases consist of two structural domains, F(1) containing the extramembraneous catalytic core and F(0) containing the membrane proton channel, linked together by a central stalk and a peripheral stalk. During catalysis, ATP synthesis in the catalytic domain of F(1) is coupled via a rotary mechanism of the central stalk subunits to proton translocation. In terms of biological role, this protein is part of the stalk that links CF(0) to CF(1). It either transmits conformational changes from CF(0) to CF(1) or is implicated in proton conduction. This Haemophilus influenzae (strain PittEE) protein is ATP synthase subunit delta.